Consider the following 296-residue polypeptide: Glycine N-acyltransferase (296 aa).

Lys-16 carries the post-translational modification N6-acetyllysine; alternate. Lys-16 is modified (N6-succinyllysine; alternate). The residue at position 113 (Lys-113) is an N6-acetyllysine. N6-acetyllysine; alternate is present on residues Lys-127 and Lys-142. 2 positions are modified to N6-succinyllysine; alternate: Lys-127 and Lys-142. Lys-159 is subject to N6-acetyllysine. Lys-169 bears the N6-succinyllysine mark. Lys-183 and Lys-256 each carry N6-acetyllysine; alternate. Lys-183 and Lys-256 each carry N6-succinyllysine; alternate. The residue at position 267 (Lys-267) is an N6-succinyllysine.

This sequence belongs to the glycine N-acyltransferase family.

The protein resides in the mitochondrion. It catalyses the reaction an acyl-CoA + glycine = an N-acylglycine + CoA + H(+). It carries out the reaction benzoyl-CoA + glycine = N-benzoylglycine + CoA + H(+). Mitochondrial acyltransferase which transfers an acyl group to the N-terminus of glycine and glutamine, although much less efficiently. Can conjugate a multitude of substrates to form a variety of N-acylglycines, thereby detoxify xenobiotics, such as benzoic acid or salicylic acid, and endogenous organic acids, such as isovaleric acid. This is Glycine N-acyltransferase (Glyat) from Rattus norvegicus (Rat).